The chain runs to 251 residues: MKIFYKAINMTLSMFTVIPLPKYEWDDRAAKHIMKLYPFIGLIIGALWYLSFFVLSKLNVPIMLMAALILTVPYILTGFLHLDGFMDVSDALLSRRDKETKLRILKDSTVGAFSVISVVLLLLVEFAGMFTVLNKNLDMRILIFIPIASRVINGYFIVSQEMLGQSSLAKFFKEGTGKVDEIILLGIYVLVALITFFTLGINYLIAILAMGLISFILLLKVKKELGGINGDVAGYILVLMEFTGILLLGII.

7 helical membrane passes run 36-56, 60-80, 110-130, 141-161, 181-201, 202-222, and 231-251; these read LYPFIGLIIGALWYLSFFVLS, VPIMLMAALILTVPYILTGFL, VGAFSVISVVLLLLVEFAGMF, ILIFIPIASRVINGYFIVSQE, EIILLGIYVLVALITFFTLGI, NYLIAILAMGLISFILLLKVK, and DVAGYILVLMEFTGILLLGII.

This sequence belongs to the CobS family. Mg(2+) is required as a cofactor.

The protein resides in the cell membrane. It catalyses the reaction alpha-ribazole + adenosylcob(III)inamide-GDP = adenosylcob(III)alamin + GMP + H(+). The enzyme catalyses alpha-ribazole 5'-phosphate + adenosylcob(III)inamide-GDP = adenosylcob(III)alamin 5'-phosphate + GMP + H(+). It functions in the pathway cofactor biosynthesis; adenosylcobalamin biosynthesis; adenosylcobalamin from cob(II)yrinate a,c-diamide: step 7/7. Joins adenosylcobinamide-GDP and alpha-ribazole to generate adenosylcobalamin (Ado-cobalamin). Also synthesizes adenosylcobalamin 5'-phosphate from adenosylcobinamide-GDP and alpha-ribazole 5'-phosphate. This is Adenosylcobinamide-GDP ribazoletransferase from Clostridium perfringens (strain ATCC 13124 / DSM 756 / JCM 1290 / NCIMB 6125 / NCTC 8237 / Type A).